A 202-amino-acid chain; its full sequence is Dephospho-CoA kinase (202 aa).

A DPCK domain is found at 4–202 (FLGLTGGIAT…EGVCHKSGMS (199 aa)). 12-17 (ATGKTT) provides a ligand contact to ATP.

Belongs to the CoaE family.

Its subcellular location is the cytoplasm. It carries out the reaction 3'-dephospho-CoA + ATP = ADP + CoA + H(+). Its pathway is cofactor biosynthesis; coenzyme A biosynthesis; CoA from (R)-pantothenate: step 5/5. Functionally, catalyzes the phosphorylation of the 3'-hydroxyl group of dephosphocoenzyme A to form coenzyme A. The protein is Dephospho-CoA kinase of Latilactobacillus sakei subsp. sakei (strain 23K) (Lactobacillus sakei subsp. sakei).